Reading from the N-terminus, the 609-residue chain is Beta-(1--&gt;2)glucan export ATP-binding/permease protein NdvA (609 aa).

Positions 21–311 (GWILAGANLL…VVSFINSVFM (291 aa)) constitute an ABC transmembrane type-1 domain. A run of 6 helical transmembrane segments spans residues 22–42 (WILA…PVLF), 68–88 (LLAV…TVAL), 146–166 (EHFA…YINW), 167–187 (RLAI…TLVV), 248–268 (WWAV…LAIF), and 285–305 (IVMF…VVSF). An ABC transporter domain is found at 345–579 (VEFNDVSFSY…GGHFAQLAKA (235 aa)). Residue 378-385 (GPTGAGKS) participates in ATP binding.

Belongs to the ABC transporter superfamily. Beta-(1--&gt;2)glucan exporter (TC 3.A.1.108.1) family. Homodimer.

It is found in the cell inner membrane. It catalyses the reaction [(1-&gt;2)-beta-D-glucosyl](n)(in) + ATP + H2O = [(1-&gt;2)-beta-D-glucosyl](n)(out) + ADP + phosphate + H(+). In terms of biological role, involved in beta-(1--&gt;2)glucan export. Transmembrane domains (TMD) form a pore in the inner membrane and the ATP-binding domain (NBD) is responsible for energy generation. The protein is Beta-(1--&gt;2)glucan export ATP-binding/permease protein NdvA of Nitrobacter winogradskyi (strain ATCC 25391 / DSM 10237 / CIP 104748 / NCIMB 11846 / Nb-255).